The following is a 368-amino-acid chain: Aspartate-semialdehyde dehydrogenase (368 aa).

NADP(+) is bound by residues 10–13 (RGMV), 37–38 (TS), and Q74. R103 is a binding site for phosphate. C136 acts as the Acyl-thioester intermediate in catalysis. At C136 the chain carries S-cysteinyl cysteine; in inhibited form. Q163 provides a ligand contact to substrate. Residues 166–167 (SG) and P194 contribute to the NADP(+) site. E242 is a substrate binding site. Phosphate is bound at residue K245. Position 268 (R268) interacts with substrate. H275 serves as the catalytic Proton acceptor. Q351 is an NADP(+) binding site.

This sequence belongs to the aspartate-semialdehyde dehydrogenase family. Homodimer.

The catalysed reaction is L-aspartate 4-semialdehyde + phosphate + NADP(+) = 4-phospho-L-aspartate + NADPH + H(+). It functions in the pathway amino-acid biosynthesis; L-lysine biosynthesis via DAP pathway; (S)-tetrahydrodipicolinate from L-aspartate: step 2/4. It participates in amino-acid biosynthesis; L-methionine biosynthesis via de novo pathway; L-homoserine from L-aspartate: step 2/3. The protein operates within amino-acid biosynthesis; L-threonine biosynthesis; L-threonine from L-aspartate: step 2/5. Functionally, catalyzes the NADPH-dependent formation of L-aspartate-semialdehyde (L-ASA) by the reductive dephosphorylation of L-aspartyl-4-phosphate. This Salmonella typhi protein is Aspartate-semialdehyde dehydrogenase.